A 147-amino-acid chain; its full sequence is Protein disulfide isomerase-like 5-1 (147 aa).

A signal peptide spans 1 to 29; the sequence is MDLAPGRRARLLVALALVVLVALAARSGA. The Thioredoxin domain maps to 30–137; it reads EVITLTEETF…LKNFVSDEAE (108 aa). Active-site nucleophile residues include C59 and C62. C59 and C62 are oxidised to a cystine.

This sequence belongs to the protein disulfide isomerase family.

In terms of biological role, acts as a protein-folding catalyst that interacts with nascent polypeptides to catalyze the formation, isomerization, and reduction or oxidation of disulfide bonds. May play a role in storage protein biogenesis. The protein is Protein disulfide isomerase-like 5-1 (PDIL5-1) of Oryza sativa subsp. japonica (Rice).